We begin with the raw amino-acid sequence, 190 residues long: Protein GrpE (190 aa).

Over residues Met-1 to Ser-18 the composition is skewed to polar residues. Positions Met-1–Asn-21 are disordered.

This sequence belongs to the GrpE family. As to quaternary structure, homodimer.

Its subcellular location is the cytoplasm. Participates actively in the response to hyperosmotic and heat shock by preventing the aggregation of stress-denatured proteins, in association with DnaK and GrpE. It is the nucleotide exchange factor for DnaK and may function as a thermosensor. Unfolded proteins bind initially to DnaJ; upon interaction with the DnaJ-bound protein, DnaK hydrolyzes its bound ATP, resulting in the formation of a stable complex. GrpE releases ADP from DnaK; ATP binding to DnaK triggers the release of the substrate protein, thus completing the reaction cycle. Several rounds of ATP-dependent interactions between DnaJ, DnaK and GrpE are required for fully efficient folding. The protein is Protein GrpE of Chlamydia trachomatis serovar A (strain ATCC VR-571B / DSM 19440 / HAR-13).